The sequence spans 512 residues: MKKQHDTIIVLDFGSQYNQLIARRIREFGVYSELHPHTITAEEIKEINPKGIIFSGGPNSVYGEGALHCDEKIFDLGLPIFGICYGMQLMTQKFGGKVERANHREYGKAVLKVENESKLYANLPEEQVVWMSHGDLVTGLPEGFVVDATSESCPIAGMSNEAKNLYGVQFHPEVRHSEHGNDLIKNFVFGVCGCSEGWNMENFIEVELEKIRETVGDKKVLCALSGGVDSSVVAVLIHKAIGDQLTCIFVDHGLLRKGEAEGVMKTFSEGFHMNVIKVDAKERFMNKLKGVEDPEQKRKIIGNEFIYVFDDEASKLEGMDFLAQGTLYTDIVESGTATAQTIKSHHNVGGLPEDMQFKLIEPLNTLFKDEVRVLGSELGIPDEIVWRQPFPGPGLGIRVLGEITEEKLEIVRESDAILREEIIKAGLDREIWQYFTALPGMRSVGVMGDERTYDYTVGIRAVTSIDGMTADWARIPWDVLEKISVRIVNEVKHVNRIVYDVTSKPPATIEWE.

The region spanning 7–197 (TIIVLDFGSQ…VFGVCGCSEG (191 aa)) is the Glutamine amidotransferase type-1 domain. Cysteine 84 serves as the catalytic Nucleophile. Active-site residues include histidine 171 and glutamate 173. Residues 198–387 (WNMENFIEVE…LGIPDEIVWR (190 aa)) form the GMPS ATP-PPase domain. 225–231 (SGGVDSS) contacts ATP.

Homodimer.

It carries out the reaction XMP + L-glutamine + ATP + H2O = GMP + L-glutamate + AMP + diphosphate + 2 H(+). It participates in purine metabolism; GMP biosynthesis; GMP from XMP (L-Gln route): step 1/1. Catalyzes the synthesis of GMP from XMP. The polypeptide is GMP synthase [glutamine-hydrolyzing] (Bacillus cereus (strain ATCC 10987 / NRS 248)).